We begin with the raw amino-acid sequence, 128 residues long: Secreted RxLR effector protein RXLR-C09 (128 aa).

Residues 1–22 (MRFCLVFIRLAAFVILSGGATS) form the signal peptide. The short motif at 58–75 (RLLRLNDQADISGHDEER) is the RxLR-dEER element.

The protein belongs to the RxLR effector family.

The protein localises to the secreted. The protein resides in the host cell membrane. Its subcellular location is the host nucleus. In terms of biological role, secreted effector that suppresses pattern-triggered immunity (PTI) in plant host. This Plasmopara halstedii (Downy mildew of sunflower) protein is Secreted RxLR effector protein RXLR-C09.